The following is a 443-amino-acid chain: 3-phosphoshikimate 1-carboxyvinyltransferase (443 aa).

K24, S25, and R29 together coordinate 3-phosphoshikimate. K24 contributes to the phosphoenolpyruvate binding site. Positions 96 and 124 each coordinate phosphoenolpyruvate. Residues S168, Q170, D316, and K343 each contribute to the 3-phosphoshikimate site. Q170 provides a ligand contact to phosphoenolpyruvate. The active-site Proton acceptor is D316. Phosphoenolpyruvate-binding residues include R347 and R391.

This sequence belongs to the EPSP synthase family. In terms of assembly, monomer.

The protein resides in the cytoplasm. The catalysed reaction is 3-phosphoshikimate + phosphoenolpyruvate = 5-O-(1-carboxyvinyl)-3-phosphoshikimate + phosphate. The protein operates within metabolic intermediate biosynthesis; chorismate biosynthesis; chorismate from D-erythrose 4-phosphate and phosphoenolpyruvate: step 6/7. Its function is as follows. Catalyzes the transfer of the enolpyruvyl moiety of phosphoenolpyruvate (PEP) to the 5-hydroxyl of shikimate-3-phosphate (S3P) to produce enolpyruvyl shikimate-3-phosphate and inorganic phosphate. The polypeptide is 3-phosphoshikimate 1-carboxyvinyltransferase (Dichelobacter nodosus (Bacteroides nodosus)).